A 249-amino-acid polypeptide reads, in one-letter code: Isoprenyl transferase (249 aa).

The active site involves D25. A Mg(2+)-binding site is contributed by D25. Substrate-binding positions include 26–29 (GNGR), W30, R38, H42, and 70–72 (STE). N73 acts as the Proton acceptor in catalysis. Residues W74, R76, R197, and 203-205 (RLS) each bind substrate. E216 contributes to the Mg(2+) binding site.

Belongs to the UPP synthase family. In terms of assembly, homodimer. The cofactor is Mg(2+).

In terms of biological role, catalyzes the condensation of isopentenyl diphosphate (IPP) with allylic pyrophosphates generating different type of terpenoids. This Streptococcus pyogenes serotype M3 (strain ATCC BAA-595 / MGAS315) protein is Isoprenyl transferase.